A 304-amino-acid chain; its full sequence is UDP-N-acetylenolpyruvoylglucosamine reductase (304 aa).

The region spanning 33 to 198 is the FAD-binding PCMH-type domain; that stretch reads KVGGPVDILL…LRATFNLVNG (166 aa). The active site involves arginine 177. Serine 227 (proton donor) is an active-site residue. Residue glutamate 297 is part of the active site.

This sequence belongs to the MurB family. Requires FAD as cofactor.

Its subcellular location is the cytoplasm. The catalysed reaction is UDP-N-acetyl-alpha-D-muramate + NADP(+) = UDP-N-acetyl-3-O-(1-carboxyvinyl)-alpha-D-glucosamine + NADPH + H(+). Its pathway is cell wall biogenesis; peptidoglycan biosynthesis. Functionally, cell wall formation. The protein is UDP-N-acetylenolpyruvoylglucosamine reductase of Clostridium beijerinckii (strain ATCC 51743 / NCIMB 8052) (Clostridium acetobutylicum).